The sequence spans 71 residues: Small ribosomal subunit protein bS21 (71 aa).

This sequence belongs to the bacterial ribosomal protein bS21 family.

The sequence is that of Small ribosomal subunit protein bS21 from Ruthia magnifica subsp. Calyptogena magnifica.